Here is a 178-residue protein sequence, read N- to C-terminus: Large ribosomal subunit protein uL6 (178 aa).

It belongs to the universal ribosomal protein uL6 family. Part of the 50S ribosomal subunit.

This protein binds to the 23S rRNA, and is important in its secondary structure. It is located near the subunit interface in the base of the L7/L12 stalk, and near the tRNA binding site of the peptidyltransferase center. This is Large ribosomal subunit protein uL6 from Francisella tularensis subsp. tularensis (strain FSC 198).